Reading from the N-terminus, the 385-residue chain is 1-deoxy-D-xylulose 5-phosphate reductoisomerase (385 aa).

NADPH contacts are provided by threonine 10, glycine 11, serine 12, isoleucine 13, lysine 37, and asparagine 124. Lysine 125 serves as a coordination point for 1-deoxy-D-xylulose 5-phosphate. Residue glutamate 126 coordinates NADPH. Aspartate 150 contributes to the Mn(2+) binding site. Positions 151, 152, 176, and 199 each coordinate 1-deoxy-D-xylulose 5-phosphate. Glutamate 152 contributes to the Mn(2+) binding site. Glycine 205 provides a ligand contact to NADPH. The 1-deoxy-D-xylulose 5-phosphate site is built by serine 212, asparagine 217, lysine 218, and glutamate 221. Glutamate 221 serves as a coordination point for Mn(2+).

It belongs to the DXR family. Mg(2+) serves as cofactor. Mn(2+) is required as a cofactor.

The catalysed reaction is 2-C-methyl-D-erythritol 4-phosphate + NADP(+) = 1-deoxy-D-xylulose 5-phosphate + NADPH + H(+). The protein operates within isoprenoid biosynthesis; isopentenyl diphosphate biosynthesis via DXP pathway; isopentenyl diphosphate from 1-deoxy-D-xylulose 5-phosphate: step 1/6. Its function is as follows. Catalyzes the NADPH-dependent rearrangement and reduction of 1-deoxy-D-xylulose-5-phosphate (DXP) to 2-C-methyl-D-erythritol 4-phosphate (MEP). The polypeptide is 1-deoxy-D-xylulose 5-phosphate reductoisomerase (Clostridium novyi (strain NT)).